Here is a 346-residue protein sequence, read N- to C-terminus: Methylthioribose-1-phosphate isomerase (346 aa).

Substrate contacts are provided by residues 46-48, R89, and Q196; that span reads RGA. Residue D237 is the Proton donor of the active site. 247–248 serves as a coordination point for substrate; the sequence is NK.

It belongs to the eIF-2B alpha/beta/delta subunits family. MtnA subfamily.

It carries out the reaction 5-(methylsulfanyl)-alpha-D-ribose 1-phosphate = 5-(methylsulfanyl)-D-ribulose 1-phosphate. Its pathway is amino-acid biosynthesis; L-methionine biosynthesis via salvage pathway; L-methionine from S-methyl-5-thio-alpha-D-ribose 1-phosphate: step 1/6. Functionally, catalyzes the interconversion of methylthioribose-1-phosphate (MTR-1-P) into methylthioribulose-1-phosphate (MTRu-1-P). The protein is Methylthioribose-1-phosphate isomerase of Geotalea daltonii (strain DSM 22248 / JCM 15807 / FRC-32) (Geobacter daltonii).